The chain runs to 600 residues: NADH-quinone oxidoreductase subunit C/D (600 aa).

The interval 1–190 is NADH dehydrogenase I subunit C; that stretch reads MIDLMPKKNT…EPFFLNEQKE (190 aa). The tract at residues 214–600 is NADH dehydrogenase I subunit D; it reads EFMFLNLGPN…IDFVMSDVDR (387 aa).

This sequence in the N-terminal section; belongs to the complex I 30 kDa subunit family. The protein in the C-terminal section; belongs to the complex I 49 kDa subunit family. NDH-1 is composed of 13 different subunits. Subunits NuoB, CD, E, F, and G constitute the peripheral sector of the complex.

It is found in the cell membrane. The enzyme catalyses a quinone + NADH + 5 H(+)(in) = a quinol + NAD(+) + 4 H(+)(out). Its function is as follows. NDH-1 shuttles electrons from NADH, via FMN and iron-sulfur (Fe-S) centers, to quinones in the respiratory chain. The immediate electron acceptor for the enzyme in this species is believed to be ubiquinone. Couples the redox reaction to proton translocation (for every two electrons transferred, four hydrogen ions are translocated across the cytoplasmic membrane), and thus conserves the redox energy in a proton gradient. The polypeptide is NADH-quinone oxidoreductase subunit C/D (Buchnera aphidicola subsp. Acyrthosiphon pisum (strain Tuc7)).